A 170-amino-acid polypeptide reads, in one-letter code: Small ribosomal subunit protein uS3mB (170 aa).

A mitochondrion-targeting transit peptide spans 1 to 30 (MAAPVMSAFGRLQGLIRTERSLLTHVQSRC).

It belongs to the universal ribosomal protein uS3 family. Component of the mitochondrial ribosome small subunit (28S) which comprises a 12S rRNA and about 30 distinct proteins.

It is found in the mitochondrion. This is Small ribosomal subunit protein uS3mB (mrps24-b) from Xenopus laevis (African clawed frog).